Consider the following 458-residue polypeptide: Monomethylamine methyltransferase MtmB2 (458 aa).

Residue Pyl-202 is a non-standard amino acid, pyrrolysine.

It belongs to the monomethylamine methyltransferase family. As to quaternary structure, can form a complex with MtmC.

The catalysed reaction is Co(I)-[methylamine-specific corrinoid protein] + methylamine + H(+) = methyl-Co(III)-[methylamine-specific corrinoid protein] + NH4(+). It functions in the pathway one-carbon metabolism; methanogenesis from methylamine. In terms of biological role, catalyzes the transfer of the methyl group from monomethylamine to the corrinoid cofactor of MtmC. The protein is Monomethylamine methyltransferase MtmB2 (mtmB2) of Methanosarcina acetivorans (strain ATCC 35395 / DSM 2834 / JCM 12185 / C2A).